We begin with the raw amino-acid sequence, 93 residues long: YcgL domain-containing protein KPN78578_22820 (93 aa).

Residues 1 to 85 form the YcgL domain; the sequence is MFCVIYRSTK…PSENLLKKHL (85 aa).

This Klebsiella pneumoniae subsp. pneumoniae (strain ATCC 700721 / MGH 78578) protein is YcgL domain-containing protein KPN78578_22820.